Consider the following 433-residue polypeptide: Xylose isomerase (433 aa).

Residues His99 and Asp102 contribute to the active site. Glu230, Glu266, His269, Asp294, Asp305, Asp307, and Asp337 together coordinate Mg(2+).

The protein belongs to the xylose isomerase family. As to quaternary structure, homotetramer. Mg(2+) serves as cofactor.

It is found in the cytoplasm. It carries out the reaction alpha-D-xylose = alpha-D-xylulofuranose. This is Xylose isomerase from Cereibacter sphaeroides (strain ATCC 17023 / DSM 158 / JCM 6121 / CCUG 31486 / LMG 2827 / NBRC 12203 / NCIMB 8253 / ATH 2.4.1.) (Rhodobacter sphaeroides).